An 88-amino-acid chain; its full sequence is Serine protease inhibitor Kazal-type 11 (88 aa).

An N-terminal signal peptide occupies residues 1–24; sequence MSSTWIKFLFILTLVLLPYFVAES. The 56-residue stretch at 32–87 folds into the Kazal-like domain; that stretch reads LRKVPNCTLYKSESDCSRTLIPVCADNQMTYYNACYFCLEQLVSPIKYKYHGICTK. The N-linked (GlcNAc...) asparagine glycan is linked to Asn-37. Intrachain disulfides connect Cys-38–Cys-69, Cys-47–Cys-66, and Cys-55–Cys-85.

Expressed in epydiymis, in the caput. Also expressed in seminal vesicles.

It localises to the secreted. In terms of biological role, probable serine protease inhibitor. This Mus musculus (Mouse) protein is Serine protease inhibitor Kazal-type 11 (Spink11).